We begin with the raw amino-acid sequence, 133 residues long: NADH dehydrogenase [ubiquinone] 1 alpha subcomplex subunit 6 (133 aa).

It belongs to the complex I LYR family. Complex I is composed of at least 49 different subunits.

The protein resides in the mitochondrion inner membrane. Its function is as follows. Accessory subunit of the mitochondrial membrane respiratory chain NADH dehydrogenase (Complex I), that is believed to be not involved in catalysis. Complex I functions in the transfer of electrons from NADH to the respiratory chain. The immediate electron acceptor for the enzyme is believed to be ubiquinone. The sequence is that of NADH dehydrogenase [ubiquinone] 1 alpha subcomplex subunit 6 from Arabidopsis thaliana (Mouse-ear cress).